The primary structure comprises 370 residues: Aminomethyltransferase (370 aa).

Belongs to the GcvT family. In terms of assembly, the glycine cleavage system is composed of four proteins: P, T, L and H.

It carries out the reaction N(6)-[(R)-S(8)-aminomethyldihydrolipoyl]-L-lysyl-[protein] + (6S)-5,6,7,8-tetrahydrofolate = N(6)-[(R)-dihydrolipoyl]-L-lysyl-[protein] + (6R)-5,10-methylene-5,6,7,8-tetrahydrofolate + NH4(+). Functionally, the glycine cleavage system catalyzes the degradation of glycine. The polypeptide is Aminomethyltransferase (Clostridium botulinum (strain 657 / Type Ba4)).